A 967-amino-acid chain; its full sequence is A disintegrin and metalloproteinase with thrombospondin motifs 1 (967 aa).

Disordered stretches follow at residues 1–27 and 192–250; these read MQRAVPEGFGRRKLGSDMGNAERAPGS and GDVG…SIRK. The N-terminal stretch at 1–49 is a signal peptide; sequence MQRAVPEGFGRRKLGSDMGNAERAPGSRSFGPVPTLLLLAAALLAVSDA. A propeptide spanning residues 50-252 is cleaved from the precursor; it reads LGRPSEEDEE…TGTGSIRKKR (203 aa). Positions 196–203 match the Cysteine switch motif; it reads GTCGVVDD. C198 contributes to the Zn(2+) binding site. The span at 203–212 shows a compositional bias: basic and acidic residues; it reads DEPRPTGKAE. Residues 213 to 226 are compositionally biased toward acidic residues; the sequence is TEDEDEGTEGEDEG. The region spanning 258 to 467 is the Peptidase M12B domain; it reads RYVETMLVAD…GHGECLMDKP (210 aa). E261, D344, and D351 together coordinate Ca(2+). 4 disulfides stabilise this stretch: C333–C385, C362–C367, C379–C462, and C417–C446. A Zn(2+)-binding site is contributed by H401. The active site involves E402. Residues H405 and H411 each coordinate Zn(2+). Ca(2+)-binding residues include C462 and D465. The Disintegrin domain occupies 476–559; that stretch reads DLPGTSYDAN…DRKHFDTPFH (84 aa). Intrachain disulfides connect C488/C511, C499/C521, C506/C540, and C534/C545. The N-linked (GlcNAc...) asparagine glycan is linked to N547. Residues 559-614 form the TSP type-1 1 domain; the sequence is HGSWGMWGPWGDCSRTCGGGVQYTMRECDNPVPKNGGKYCEGKRVRYRSCNLEDCP. 3 disulfide bridges follow: C571/C608, C575/C613, and C586/C598. 2 N-linked (GlcNAc...) asparagine glycosylation sites follow: N720 and N764. Positions 725 to 849 are spacer; it reads KKISGSVTSA…YFVKKKKESF (125 aa). TSP type-1 domains are found at residues 854 to 905 and 908 to 967; these read TFSA…RPCA and PCPQ…AECS.

Zn(2+) is required as a cofactor. Post-translationally, the precursor is cleaved by a furin endopeptidase. Glycosylated. Can be O-fucosylated by POFUT2 on a serine or a threonine residue found within the consensus sequence C1-X(2)-(S/T)-C2-G of the TSP type-1 repeat domains where C1 and C2 are the first and second cysteine residue of the repeat, respectively. Fucosylated repeats can then be further glycosylated by the addition of a beta-1,3-glucose residue by the glucosyltransferase, B3GALTL. Fucosylation mediates the efficient secretion of ADAMTS family members. Can also be C-glycosylated with one or two mannose molecules on tryptophan residues within the consensus sequence W-X-X-W of the TPRs, and N-glycosylated. These other glycosylations can also facilitate secretion.

Its subcellular location is the secreted. It localises to the extracellular space. It is found in the extracellular matrix. Its function is as follows. Metalloprotease which cleaves aggrecan, a cartilage proteoglycan, at the '1938-Glu-|-Leu-1939' site (within the chondroitin sulfate attachment domain), and may be involved in its turnover. Also cleaves COMP. Has angiogenic inhibitor activity. May play a critical role in follicular rupture. The protein is A disintegrin and metalloproteinase with thrombospondin motifs 1 (ADAMTS1) of Homo sapiens (Human).